Reading from the N-terminus, the 942-residue chain is MLLLLGLCLGLSLCVGSQEEAQSWGHSSEQDGLRVPRQVRLLQRLKTKPLMTEFSVKSTIISRYAFTTVSCRMLNRASEDQDIEFQMQIPAAAFITNFTMLIGDKVYQGEITEREKKSGDRVKEKRNKTTEENGEKGTEIFRASAVIPSKDKAAFFLSYEELLQRRLGKYEHSISVRPQQLSGRLSVDVNILESAGIASLEVLPLHNSRQRGSGRGEDDSGPPPSTVINQNETFANIIFKPTVVQQARIAQNGILGDFIIRYDVNREQSIGDIQVLNGYFVHYFAPKDLPPLPKNVVFVLDSSASMVGTKLRQTKDALFTILHDLRPQDRFSIIGFSNRIKVWKDHLISVTPDSIRDGKVYIHHMSPTGGTDINGALQRAIRLLNKYVAHSGIGDRSVSLIVFLTDGKPTVGETHTLKILNNTREAARGQVCIFTIGIGNDVDFRLLEKLSLENCGLTRRVHEEEDAGSQLIGFYDEIRTPLLSDIRIDYPPSSVVQATKTLFPNYFNGSEIIIAGKLVDRKLDHLHVEVTASNSKKFIILKTDVPVRPQKAGKDVTGSPRPGGDGEGDTNHIERLWSYLTTKELLSSWLQSDDEPEKERLRQRAQALAVSYRFLTPFTSMKLRGPVPRMDGLEEAHGMSAAMGPEPVVQSVRGAGTQPGPLLKKPYQPRIKISKTSVDGDPHFVVDFPLSRLTVCFNIDGQPGDILRLVSDHRDSGVTVNGELIGAPAPPNGHKKQRTYLRTITILINKPERSYLEITPSRVILDGGDRLVLPCNQSVVVGSWGLEVSVSANANVTVTIQGSIAFVILIHLYKKPAPFQRHHLGFYIANSEGLSSNCHGLLGQFLNQDARLTEDPAGPSQNLTHPLLLQVGEGPEAVLTVKGHQVPVVWKQRKIYNGEEQIDCWFARNNAAKLIDGEYKDYLAFHPFDTGMTLGQGMSREL.

An N-terminal signal peptide occupies residues 1–16 (MLLLLGLCLGLSLCVG). The VIT domain occupies 35–161 (VPRQVRLLQR…KAAFFLSYEE (127 aa)). N-linked (GlcNAc...) asparagine glycosylation is found at Asn97 and Asn127. 2 disordered regions span residues 116–136 (KKSGDRVKEKRNKTTEENGEK) and 208–227 (SRQRGSGRGEDDSGPPPSTV). Residues Asn231, Asn421, and Asn508 are each glycosylated (N-linked (GlcNAc...) asparagine). In terms of domain architecture, VWFA spans 295 to 478 (NVVFVLDSSA…SQLIGFYDEI (184 aa)). The tract at residues 550-571 (QKAGKDVTGSPRPGGDGEGDTN) is disordered. N-linked (GlcNAc...) asparagine glycans are attached at residues Asn776, Asn795, and Asn862.

It belongs to the ITIH family. Abundantly expressed in placenta. Less abundant expression in mammary gland and ovary. Expression is barely detectable levels in all other tissues tested.

It localises to the secreted. Its function is as follows. May act as a tumor suppressor. The protein is Inter-alpha-trypsin inhibitor heavy chain H5 (ITIH5) of Homo sapiens (Human).